The sequence spans 570 residues: Periplasmic trehalase (570 aa).

The first 34 residues, 1-34, serve as a signal peptide directing secretion; that stretch reads MIPPEIRRSVLLQKAIKLALAGTLLTFASFSATA. Substrate contacts are provided by residues Arg159, 166-167, Asn203, 212-214, 284-286, and Gly317; these read WD, RSQ, and RPE. Catalysis depends on proton donor/acceptor residues Asp319 and Glu503. Residue Glu518 participates in substrate binding. The disordered stretch occupies residues 544–570; sequence KPCDSVPSTRPASLSATPTKTPSAATQ. The segment covering 554–570 has biased composition (low complexity); that stretch reads PASLSATPTKTPSAATQ.

This sequence belongs to the glycosyl hydrolase 37 family. As to quaternary structure, monomer.

The protein resides in the periplasm. The enzyme catalyses alpha,alpha-trehalose + H2O = alpha-D-glucose + beta-D-glucose. Its function is as follows. Provides the cells with the ability to utilize trehalose at high osmolarity by splitting it into glucose molecules that can subsequently be taken up by the phosphotransferase-mediated uptake system. The polypeptide is Periplasmic trehalase (Salmonella paratyphi B (strain ATCC BAA-1250 / SPB7)).